The chain runs to 651 residues: Bromodomain-containing protein 7 (651 aa).

A Glycyl lysine isopeptide (Lys-Gly) (interchain with G-Cter in SUMO2) cross-link involves residue K21. Polar residues predominate over residues T35–D45. The interval T35–E132 is disordered. A compositionally biased stretch (basic and acidic residues) spans S47 to K57. K52 participates in a covalent cross-link: Glycyl lysine isopeptide (Lys-Gly) (interchain with G-Cter in SUMO2). Over residues H58 to G69 the composition is skewed to basic residues. The Nuclear localization signal signature appears at K65–R96. Positions E70–Q106 are enriched in basic and acidic residues. Glycyl lysine isopeptide (Lys-Gly) (interchain with G-Cter in SUMO2) cross-links involve residues K127, K186, K197, K201, K212, and K241. One can recognise a Bromo domain in the interval V131–E235. Residues T253 to E312 are disordered. Residues Q273 to E312 are compositionally biased toward basic and acidic residues. Residues S279 and S289 each carry the phosphoserine modification. Residues K305 and K307 each participate in a glycyl lysine isopeptide (Lys-Gly) (interchain with G-Cter in SUMO2) cross-link. N6-acetyllysine is present on K328. A Glycyl lysine isopeptide (Lys-Gly) (interchain with G-Cter in SUMO2) cross-link involves residue K344. S380 bears the Phosphoserine mark. Residue K389 forms a Glycyl lysine isopeptide (Lys-Gly) (interchain with G-Cter in SUMO2) linkage. S482 carries the phosphoserine modification. Residue T514 is modified to Phosphothreonine. The stretch at S536–R567 forms a coiled coil. Residue S621 is modified to Phosphoserine.

As to quaternary structure, interacts with TRIM24, PTPN13 and DVL1. Identified in a complex with SMARCA4/BRG1, SMARCC1/BAF155, SMARCE1/BAF57, DPF2/BAF45D and ARID2, subunits of the SWI/SNF-B (PBAF) chromatin remodeling complex. Interacts with IRF2 and HNRPUL1. Interacts (via N-terminus) with TP53. Interacts (via C-terminus) with EP300. Interacts with BRCA1. Interacts (via bromo domain) with histone H3 (via N-terminus) acetylated at 'Lys-14' (H3K14ac). Has low affinity for histone H3 acetylated at 'Lys-9' (H3K9ac). Has the highest affinity for histone H3 that is acetylated both at 'Lys-9' (H3K9ac) and at 'Lys-14' (H3K14ac). Has very low affinity for non-acetylated histone H3. Interacts (via bromo domain) with histone H4 (via N-terminus) acetylated at 'Lys-8' (H3K8ac) (in vitro).

The protein resides in the nucleus. Its subcellular location is the chromosome. Its function is as follows. Acts both as coactivator and as corepressor. May play a role in chromatin remodeling. Activator of the Wnt signaling pathway in a DVL1-dependent manner by negatively regulating the GSK3B phosphotransferase activity. Induces dephosphorylation of GSK3B at 'Tyr-216'. Down-regulates TRIM24-mediated activation of transcriptional activation by AR. Transcriptional corepressor that down-regulates the expression of target genes. Binds to target promoters, leading to increased histone H3 acetylation at 'Lys-9' (H3K9ac). Binds to the ESR1 promoter. Recruits BRCA1 and POU2F1 to the ESR1 promoter. Coactivator for TP53-mediated activation of transcription of a set of target genes. Required for TP53-mediated cell-cycle arrest in response to oncogene activation. Promotes acetylation of TP53 at 'Lys-382', and thereby promotes efficient recruitment of TP53 to target promoters. Inhibits cell cycle progression from G1 to S phase. In Pongo abelii (Sumatran orangutan), this protein is Bromodomain-containing protein 7 (BRD7).